The primary structure comprises 929 residues: Facilitated trehalose transporter Tret1 (929 aa).

Residues 1-275 (MSGRDNRAAG…VGYQQQKATS (275 aa)) are disordered. Residues 1–462 (MSGRDNRAAG…LEVYRPTTNP (462 aa)) lie on the Cytoplasmic side of the membrane. Residues 10–26 (GAGGGSGGGGGGGGGGG) show a composition bias toward gly residues. Over residues 41-59 (KLKEKLTRAGEELGYHRVE) the composition is skewed to basic and acidic residues. Residues 60–72 (SNLSASNTATSLD) show a composition bias toward polar residues. Low complexity-rich tracts occupy residues 85 to 141 (AAPQ…QPLR), 168 to 178 (QEIQQQQLQQQ), and 237 to 254 (SNSN…VAAD). 3 positions are modified to phosphoserine: Ser320, Ser321, and Ser322. Residues 352–371 (VLHGSSTDSDEEGEDAEHKR) form a disordered region. Ser392 and Ser394 each carry phosphoserine. Positions 398–420 (FLSSRQNFQQQRSISTDSRKSRR) are disordered. A compositionally biased stretch (polar residues) spans 402-413 (RQNFQQQRSIST). The helical transmembrane segment at 463-483 (IYIWTQVLAALSVSLGSLVVG) threads the bilayer. Residues 484 to 512 (FSSAYTSPALVSMTDRNLTSFDVSTEDAS) lie on the Extracellular side of the membrane. N-linked (GlcNAc...) asparagine glycosylation is present at Asn500. The chain crosses the membrane as a helical span at residues 513–533 (WVGGIMPLAGLAGGIAGGPLI). At 534–541 (EYLGRRNT) the chain is on the cytoplasmic side. The chain crosses the membrane as a helical span at residues 542–562 (ILATAVPFIISWLLIACAVNV). Residues 563–569 (PMVLSGR) are Extracellular-facing. A helical membrane pass occupies residues 570 to 590 (FLAGFCVGIASLSLPVYLGET). The Cytoplasmic segment spans residues 591 to 596 (VQPEVR). A helical membrane pass occupies residues 597–617 (GTLGLLPTAFGNIGILLCFIA). The Extracellular segment spans residues 618–624 (GTYMDWS). A helical transmembrane segment spans residues 625 to 645 (MLAFLGGALPVPFLILMFLIP). The Cytoplasmic segment spans residues 646–708 (ETPRWYVSRG…ELLKRSNLKP (63 aa)). Residues 709-729 (LSISLGLMFFQQLSGINAVIF) traverse the membrane as a helical segment. Residues 730–745 (YTVQIFKDAGSTLDGN) lie on the Extracellular side of the membrane. A helical transmembrane segment spans residues 746–766 (VCTIIVGTVNFIATFIGILLI). Residues 767–772 (DRAGRK) are Cytoplasmic-facing. The chain crosses the membrane as a helical span at residues 773 to 793 (ILLYVSNIAMILTLFVLGGFF). Over 794–804 (YCKANGMDVSN) the chain is Extracellular. A helical membrane pass occupies residues 805 to 825 (VGLLPLCCFVVYILGFSLGFG). The Cytoplasmic portion of the chain corresponds to 826 to 839 (PIPWLMMGEILPAK). Residues 840 to 860 (IRGSAASVATAFNWTCTFVVT) traverse the membrane as a helical segment. At 861 to 873 (KSFLDMIKLIGAH) the chain is on the extracellular side. Residues 874–894 (GAFWLFGVICCIGMFFVIFCV) form a helical membrane-spanning segment. The Cytoplasmic portion of the chain corresponds to 895 to 929 (PETQGKTLEDIERKMMGRVRRMSSVANIKPLSFNM). Phosphoserine occurs at positions 917 and 918.

It belongs to the major facilitator superfamily. Sugar transporter (TC 2.A.1.1) family. Trehalose transporter subfamily.

It is found in the cell membrane. Functionally, low-capacity facilitative transporter for trehalose. Does not transport maltose, sucrose or lactose. Mediates the bidirectional transfer of trehalose. Responsible for the transport of trehalose synthesized in the fat body and the incorporation of trehalose into other tissues that require a carbon source, thereby regulating trehalose levels in the hemolymph. This is Facilitated trehalose transporter Tret1 from Drosophila grimshawi (Hawaiian fruit fly).